The chain runs to 200 residues: Ras-related protein Rab5 (200 aa).

GTP contacts are provided by residues 17-25 (GDMGAGKSS), 36-42 (LEFQEST), 65-69 (DTAGQ), 123-126 (NKAD), and 153-155 (SAK). The Effector region signature appears at 39 to 47 (QESTIGAAF). S-geranylgeranyl cysteine attachment occurs at residues Cys198 and Cys199.

It belongs to the small GTPase superfamily. Rab family. Virtually not expressed in leaves, higher in stems and roots, and highest in flowers.

It localises to the cell membrane. In terms of biological role, protein transport. Probably involved in vesicular traffic. The protein is Ras-related protein Rab5 (RAB5) of Nicotiana tabacum (Common tobacco).